Here is a 207-residue protein sequence, read N- to C-terminus: Large ribosomal subunit protein uL4 (207 aa).

The tract at residues 44-78 (LRQGTHKTKTRSEVRGGGRKPWRQKGTGRARQGSI) is disordered. Over residues 60–71 (GGRKPWRQKGTG) the composition is skewed to basic residues.

The protein belongs to the universal ribosomal protein uL4 family. In terms of assembly, part of the 50S ribosomal subunit.

Its function is as follows. One of the primary rRNA binding proteins, this protein initially binds near the 5'-end of the 23S rRNA. It is important during the early stages of 50S assembly. It makes multiple contacts with different domains of the 23S rRNA in the assembled 50S subunit and ribosome. In terms of biological role, forms part of the polypeptide exit tunnel. The chain is Large ribosomal subunit protein uL4 from Halalkalibacterium halodurans (strain ATCC BAA-125 / DSM 18197 / FERM 7344 / JCM 9153 / C-125) (Bacillus halodurans).